The chain runs to 396 residues: Anhydro-N-acetylmuramic acid kinase (396 aa).

19 to 26 (GTSADGID) is an ATP binding site.

It belongs to the anhydro-N-acetylmuramic acid kinase family.

The catalysed reaction is 1,6-anhydro-N-acetyl-beta-muramate + ATP + H2O = N-acetyl-D-muramate 6-phosphate + ADP + H(+). Its pathway is amino-sugar metabolism; 1,6-anhydro-N-acetylmuramate degradation. It participates in cell wall biogenesis; peptidoglycan recycling. Functionally, catalyzes the specific phosphorylation of 1,6-anhydro-N-acetylmuramic acid (anhMurNAc) with the simultaneous cleavage of the 1,6-anhydro ring, generating MurNAc-6-P. Is required for the utilization of anhMurNAc either imported from the medium or derived from its own cell wall murein, and thus plays a role in cell wall recycling. The protein is Anhydro-N-acetylmuramic acid kinase of Colwellia psychrerythraea (strain 34H / ATCC BAA-681) (Vibrio psychroerythus).